Here is an 885-residue protein sequence, read N- to C-terminus: MKNKYKETLNIPQDVLPMRANLIEKELKFKTFWDQNKIYQKALEKNKTNKPFILHDGPPYANGDLHIGHALNKILKDIVVRYKSLSGFYAPFVPGWDTHGLPIENKILKELKIDDHKNISTLELRKQAREYALSQIKNQKKQFLTMQLFSDFKDYYQTLDPKFEAEQLKVFKKMALDGLIYKSLQPVFWSPSSQSALAEAEVEYHEHKSHSIYTAFKIVKGNKFVEKNDFLVIWTTTPWTLIANSGVSVKEEFSYSKINYENKNYIFATDLVQKVTEIFGWKNFKIISSFQGKDLVGIEYQRPIKQEKTAPIVLGHHVTLESGSGLVHMAPLFGLDDFIIGRVEKLEEIMHINDDGSINEFGNQFANKFYWDANPEINEFLKQNNLLLHHSFLYHSYPHDWRTNKPVIYRGSNQWFVSIDPIKEKITKSIEHVESYPTWGISRLKTMIDNRTSWTISRQRAWGVPIPIFYNEKNEPVFEEELFDHIIDLVSKYGTDIWFEKSTDELLPEKYKNKNWTKEKDIMDVWFDSGTTSMGVKIEGAPVPWDVYLEGSDQYRGWFNSSLINSVVYYNQAPFKKLVSHGFVLDEKGNKMSKSKGNVVLPQEIISKFGADILRLWVANSEYTSDVTIGENIINQNVEIYRKFRNTFRFLIANLVDFDYKKDLKELTGIHLLIKEQLETLKFNTKIAYENFQFTNVIKLTNNFVYNLSSFYLDFSKDILYANKIEDLQRKMIQTNFYNITKTLLLILAPILPTTIEEVYQIFDQANKKESVHLENFFGISSIETIQEEKWNSFFELKNKVYALIEIAIKDKLIKSANQALVYIKETDEFLKTLDLKNLLMVGKVIFSKENKIENYEGHLCERCRIYFDFIDKDNLCVRCSKVIL.

The short motif at 59 to 69 (PYANGDLHIGH) is the 'HIGH' region element. Glu-550 is an L-isoleucyl-5'-AMP binding site. The 'KMSKS' region signature appears at 591 to 595 (KMSKS). Lys-594 lines the ATP pocket. Cys-861, Cys-864, Cys-877, and Cys-880 together coordinate Zn(2+).

The protein belongs to the class-I aminoacyl-tRNA synthetase family. IleS type 1 subfamily. In terms of assembly, monomer. Zn(2+) serves as cofactor.

The protein resides in the cytoplasm. The catalysed reaction is tRNA(Ile) + L-isoleucine + ATP = L-isoleucyl-tRNA(Ile) + AMP + diphosphate. Catalyzes the attachment of isoleucine to tRNA(Ile). As IleRS can inadvertently accommodate and process structurally similar amino acids such as valine, to avoid such errors it has two additional distinct tRNA(Ile)-dependent editing activities. One activity is designated as 'pretransfer' editing and involves the hydrolysis of activated Val-AMP. The other activity is designated 'posttransfer' editing and involves deacylation of mischarged Val-tRNA(Ile). The sequence is that of Isoleucine--tRNA ligase from Mycoplasma mobile (strain ATCC 43663 / 163K / NCTC 11711) (Mesomycoplasma mobile).